We begin with the raw amino-acid sequence, 967 residues long: MNRFNGLCKVCSERRYRQITIRRGKDGFGFTICCDSPVRVQAVDSGGPAERAGLQQLDTVLQLNERPVEHWKCVELAHEIRSCPSEIILLVWRVVPQIKPGPDGGVLRRASCKSTHDLLSPPNKREKNCTHGAPTRPEQRHSCHLVCDSSDGLLLGGWERYTEVGKRSGQHTLPALSRATTPTDPNYIILAPLNPGSQLLRPVYQEDAIPEEPGTTTKGKSYTGLGKKSRLMKTVQTMKGHSNYQDCSALRPHIPHSSYGTYVTLAPKVLVFPVFVQPLDLCNPARTLLLSEELLLYEGRNKTSQVTLFAYSDLLLFTKEEEPGRCDVLRNPLYLQSVKLQEGSSEDLKFCVLYLAEKAECLFTLEAHSQEQKKRVCWCLSENIAKQQQLAATPTERKMFETEADEKEMPLVEGKGPGAEERTPSKDPSPSQELPPGQELPPSKDPSPSQELPPGQELPPSKDPSPSQELPPGQELPSSKNPSPSQELPAGQDLPPRKESFSGQEAAPGPESPSSEDIATCQNPPQSPETSTSKDSPPGQGSSPTTEVPSCQGLPAGQESTSQDPLLSQEPPAIPESSASDQNVLPSQESPPSQGSLSEKALAEQTISPGELPAATAGEPSASRPNFVIPEVRLDSAYSQQDGAHGGSSGEDEDAEEGEEGEEGEEDEEDDTNDDNYGDRNEAKRSSLIETGQGAEGGLSLRVQNSLRRRTHSEGSLLQEARGPCFASDTTLHCSDGEGTTSTWAIPSPRTLKKELGRNGGSMHHLSLFFTGHRKMSGTDLADDVEASRKRKSKNIAKDMKNKLAIFRRRNESPGAQPAGKADKTTKSFKPTSEEALKWSESLEKLLLHKYGLEVFQAFLRTEFSEENLEFWLACEDFKKVKSQSKMAAKAKKIFAEFIAIQACKEVNLDSYTREHTKENLQSITRGCFDLAQKRIFGLMEKDSYPRFLRSDLYLDLINQKKMSPPL.

The region spanning 18 to 95 is the PDZ domain; the sequence is QITIRRGKDG…EIILLVWRVV (78 aa). The interval 115-135 is disordered; the sequence is THDLLSPPNKREKNCTHGAPT. Residue Arg167 is modified to Omega-N-methylarginine. A disordered region spans residues 389-705; that stretch reads QLAATPTERK…EGGLSLRVQN (317 aa). 3 stretches are compositionally biased toward polar residues: residues 476 to 486, 512 to 549, and 577 to 597; these read LPSSKNPSPSQ, SPSS…TEVP, and SSAS…QGSL. Over residues 650 to 676 the composition is skewed to acidic residues; sequence GEDEDAEEGEEGEEGEEDEEDDTNDDN. Positions 677-687 are enriched in basic and acidic residues; sequence YGDRNEAKRSS. Residues Ser713, Ser716, Ser748, and Ser777 each carry the phosphoserine modification. The interval 807–830 is disordered; sequence FRRRNESPGAQPAGKADKTTKSFK. Basic and acidic residues predominate over residues 821 to 830; it reads KADKTTKSFK. An RGS domain is found at 842 to 967; sequence SLEKLLLHKY…INQKKMSPPL (126 aa).

Binds EFNB1 and EFNB2. Binds the GNB1-GNG2 heterodimer. Binds ESR1. Phosphorylated by cyclic GMP-dependent protein kinase. Post-translationally, ISGylated. Detected in kidney, uterus, ovary, heart, brain, spleen, lung and testis.

It is found in the cytoplasm. The protein localises to the membrane. Its subcellular location is the nucleus. Functionally, down-regulates signaling from heterotrimeric G-proteins by increasing the GTPase activity of the alpha subunits, thereby driving them into their inactive GDP-bound form. Down-regulates G-protein-mediated release of inositol phosphates and activation of MAP kinases. The sequence is that of Regulator of G-protein signaling 3 (Rgs3) from Rattus norvegicus (Rat).